A 554-amino-acid chain; its full sequence is Hydroxylamine reductase (554 aa).

Positions 3, 6, 18, and 25 each coordinate [2Fe-2S] cluster. Residues histidine 252, glutamate 276, cysteine 320, cysteine 408, cysteine 436, cysteine 461, glutamate 495, and lysine 497 each coordinate hybrid [4Fe-2O-2S] cluster. Cysteine 408 is modified (cysteine persulfide).

Belongs to the HCP family. The cofactor is [2Fe-2S] cluster. It depends on hybrid [4Fe-2O-2S] cluster as a cofactor.

Its subcellular location is the cytoplasm. It catalyses the reaction A + NH4(+) + H2O = hydroxylamine + AH2 + H(+). Catalyzes the reduction of hydroxylamine to form NH(3) and H(2)O. The chain is Hydroxylamine reductase from Shewanella baltica (strain OS223).